Here is a 206-residue protein sequence, read N- to C-terminus: Ras-related protein RABG3e (206 aa).

15 to 22 (GDSGVGKT) provides a ligand contact to GTP. The short motif at 37–45 (YKATIGADF) is the Effector region element. GTP contacts are provided by residues 63-67 (DTAGQ), 125-128 (NKID), and 158-159 (SA). 2 S-geranylgeranyl cysteine lipidation sites follow: cysteine 204 and cysteine 206. A Cysteine methyl ester modification is found at cysteine 206.

The protein belongs to the small GTPase superfamily. Rab family.

It is found in the cell membrane. Its function is as follows. Intracellular vesicle trafficking and protein transport. May play a role in adaptation to stress by recylcing macromolecules in specific cellular compartments. The protein is Ras-related protein RABG3e (RABG3E) of Arabidopsis thaliana (Mouse-ear cress).